The primary structure comprises 119 residues: Beta-2-microglobulin (119 aa).

Residues methionine 1–alanine 20 form the signal peptide. The Ig-like C1-type domain maps to proline 25 to lysine 114. An intrachain disulfide couples cysteine 45 to cysteine 100.

Belongs to the beta-2-microglobulin family. As to quaternary structure, heterodimer of an alpha chain and a beta chain. Beta-2-microglobulin is the beta-chain of major histocompatibility complex class I molecules.

It localises to the secreted. Functionally, component of the class I major histocompatibility complex (MHC). Involved in the presentation of peptide antigens to the immune system. The sequence is that of Beta-2-microglobulin (B2M) from Callithrix aurita (White-eared marmoset).